A 369-amino-acid polypeptide reads, in one-letter code: tRNA/tmRNA (uracil-C(5))-methyltransferase (369 aa).

Residues Gln193, Tyr221, Asn226, Glu242, and Asp302 each coordinate S-adenosyl-L-methionine. Cys327 serves as the catalytic Nucleophile. The active-site Proton acceptor is the Glu361.

This sequence belongs to the class I-like SAM-binding methyltransferase superfamily. RNA M5U methyltransferase family. TrmA subfamily.

It catalyses the reaction uridine(54) in tRNA + S-adenosyl-L-methionine = 5-methyluridine(54) in tRNA + S-adenosyl-L-homocysteine + H(+). The catalysed reaction is uridine(341) in tmRNA + S-adenosyl-L-methionine = 5-methyluridine(341) in tmRNA + S-adenosyl-L-homocysteine + H(+). Dual-specificity methyltransferase that catalyzes the formation of 5-methyluridine at position 54 (m5U54) in all tRNAs, and that of position 341 (m5U341) in tmRNA (transfer-mRNA). The polypeptide is tRNA/tmRNA (uracil-C(5))-methyltransferase (Sulfurimonas denitrificans (strain ATCC 33889 / DSM 1251) (Thiomicrospira denitrificans (strain ATCC 33889 / DSM 1251))).